A 498-amino-acid polypeptide reads, in one-letter code: Hyaluronan-mediated motility receptor (498 aa).

Residues Glu-150–Gln-331 are required for interaction with FAM83D. N-linked (GlcNAc...) asparagine glycans are attached at residues Asn-262 and Asn-302. 2 hyaluronic acid-binding regions span residues Lys-420–Lys-430 and Lys-442–Lys-451. Asn-483 carries N-linked (GlcNAc...) asparagine glycosylation. Thr-488 carries the post-translational modification Phosphothreonine.

In terms of assembly, interacts with ANKRD26. Interacts with DYNLL1. Interacts with FAM83D/CHICA.

The protein localises to the cell surface. The protein resides in the cytoplasm. Its subcellular location is the cytoskeleton. It localises to the spindle. In terms of biological role, receptor for hyaluronic acid (HA). Involved in cell motility. When hyaluronan binds to HMMR, the phosphorylation of a number of proteins, including the PTK2/FAK1 occurs. May also be involved in cellular transformation and metastasis formation, and in regulating extracellular-regulated kinase (ERK) activity. May act as a regulator of adipogenisis. This chain is Hyaluronan-mediated motility receptor (Hmmr), found in Rattus norvegicus (Rat).